Reading from the N-terminus, the 265-residue chain is Hydroxyethylthiazole kinase (265 aa).

Met-50 contacts substrate. Residues Arg-125 and Thr-171 each coordinate ATP. Position 198 (Gly-198) interacts with substrate.

Belongs to the Thz kinase family. Requires Mg(2+) as cofactor.

The catalysed reaction is 5-(2-hydroxyethyl)-4-methylthiazole + ATP = 4-methyl-5-(2-phosphooxyethyl)-thiazole + ADP + H(+). It participates in cofactor biosynthesis; thiamine diphosphate biosynthesis; 4-methyl-5-(2-phosphoethyl)-thiazole from 5-(2-hydroxyethyl)-4-methylthiazole: step 1/1. Its function is as follows. Catalyzes the phosphorylation of the hydroxyl group of 4-methyl-5-beta-hydroxyethylthiazole (THZ). This chain is Hydroxyethylthiazole kinase, found in Salmonella choleraesuis (strain SC-B67).